The sequence spans 356 residues: Tyrosine recombinase XerS (356 aa).

The 106-residue stretch at 16 to 121 (IMPWYVLEYY…ALSSLFKYLT (106 aa)) folds into the Core-binding (CB) domain. The 186-residue stretch at 169–354 (EFLEYIDCEY…VNDEQKNALD (186 aa)) folds into the Tyr recombinase domain. Catalysis depends on residues Arg-210, Lys-234, His-306, Arg-309, and His-332. The O-(3'-phospho-DNA)-tyrosine intermediate role is filled by Tyr-341.

Belongs to the 'phage' integrase family. XerS subfamily.

It localises to the cytoplasm. With respect to regulation, ftsK is required for recombination. Its function is as follows. Site-specific tyrosine recombinase, which acts by catalyzing the cutting and rejoining of the recombining DNA molecules. Essential to convert dimers of the bacterial chromosome into monomers to permit their segregation at cell division. The polypeptide is Tyrosine recombinase XerS (Streptococcus agalactiae serotype Ia (strain ATCC 27591 / A909 / CDC SS700)).